The primary structure comprises 114 residues: Small ribosomal subunit protein bS16 (114 aa).

It belongs to the bacterial ribosomal protein bS16 family.

The chain is Small ribosomal subunit protein bS16 from Prochlorococcus marinus subsp. pastoris (strain CCMP1986 / NIES-2087 / MED4).